The chain runs to 361 residues: Molybdopterin synthase catalytic subunit (361 aa).

Substrate-binding positions include His101 to Arg102, Lys117, and Lys124 to Glu126.

Belongs to the MoaE family. MOCS2B subfamily. Heterotetramer; composed of 2 small (Mocs2A) and 2 large (Mocs2B) subunits.

The protein resides in the cytoplasm. It catalyses the reaction 2 [molybdopterin-synthase sulfur-carrier protein]-C-terminal-Gly-aminoethanethioate + cyclic pyranopterin phosphate + H2O = molybdopterin + 2 [molybdopterin-synthase sulfur-carrier protein]-C-terminal Gly-Gly + 2 H(+). It participates in cofactor biosynthesis; molybdopterin biosynthesis. Catalytic subunit of the molybdopterin synthase complex, a complex that catalyzes the conversion of precursor Z into molybdopterin. Acts by mediating the incorporation of 2 sulfur atoms from thiocarboxylated Mocs2A into precursor Z to generate a dithiolene group. The protein is Molybdopterin synthase catalytic subunit of Drosophila pseudoobscura pseudoobscura (Fruit fly).